Consider the following 670-residue polypeptide: Histone-lysine N-methyltransferase, H3 lysine-9 specific SUVH1 (670 aa).

Residues 53–140 (YPFSSSQANQ…RPISRPENMN (88 aa)) are disordered. Positions 68 to 79 (NQAQYPPQHQQP) are enriched in low complexity. Residues 123–133 (VKRRIPKKRPI) are compositionally biased toward basic residues. Residues 211–357 (GIVPGVEIGD…HNTFKYKLVR (147 aa)) enclose the YDG domain. Positions 432–492 (FGCDCANLCK…TCKNKVTQMG (61 aa)) constitute a Pre-SET domain. Zn(2+) is bound by residues Cys-434, Cys-436, Cys-440, Cys-447, Cys-449, Cys-475, Cys-479, Cys-481, and Cys-484. One can recognise an SET domain in the interval 495–639 (VRLEVFKTAN…PMTELTYDYG (145 aa)). S-adenosyl-L-methionine is bound by residues 505–507 (RGW), Asp-541, Tyr-543, Arg-593, and 596–597 (NH). The Zn(2+) site is built by Cys-599, Cys-658, Cys-660, and Cys-665. The Post-SET domain maps to 654 to 670 (GKRKCFCGSAYCRGSFG).

It belongs to the class V-like SAM-binding methyltransferase superfamily. Histone-lysine methyltransferase family. Suvar3-9 subfamily. Expressed in leaves stems and flowers.

The protein localises to the nucleus. The protein resides in the chromosome. Its subcellular location is the centromere. The catalysed reaction is L-lysyl(9)-[histone H3] + 2 S-adenosyl-L-methionine = N(6),N(6)-dimethyl-L-lysyl(9)-[histone H3] + 2 S-adenosyl-L-homocysteine + 2 H(+). Its function is as follows. Histone methyltransferase. Methylates 'Lys-9' of histone H3. H3 'Lys-9' methylation represents a specific tag for epigenetic transcriptional repression. This is Histone-lysine N-methyltransferase, H3 lysine-9 specific SUVH1 (SUVH1) from Arabidopsis thaliana (Mouse-ear cress).